Consider the following 235-residue polypeptide: Glycerol-3-phosphate acyltransferase (235 aa).

The next 6 membrane-spanning stretches (helical) occupy residues 2 to 22, 56 to 76, 94 to 114, 126 to 146, 152 to 172, and 190 to 210; these read FTLIVILAVSYLIGSIPTSII, TVTILDIVKGAIAAISVVVFF, LIAGLSAVFGHVFTVFAGFKG, FGIAPVTTLIVLGVFLLVVFL, VASILAAIAFPVIIAVRKYLF, and FIHDSLDYHLLIFGFIVAAAI.

The protein belongs to the PlsY family. As to quaternary structure, probably interacts with PlsX.

Its subcellular location is the cell inner membrane. It carries out the reaction an acyl phosphate + sn-glycerol 3-phosphate = a 1-acyl-sn-glycero-3-phosphate + phosphate. Its pathway is lipid metabolism; phospholipid metabolism. Its function is as follows. Catalyzes the transfer of an acyl group from acyl-phosphate (acyl-PO(4)) to glycerol-3-phosphate (G3P) to form lysophosphatidic acid (LPA). This enzyme utilizes acyl-phosphate as fatty acyl donor, but not acyl-CoA or acyl-ACP. In Chlorobium phaeobacteroides (strain BS1), this protein is Glycerol-3-phosphate acyltransferase.